Reading from the N-terminus, the 295-residue chain is Protease HtpX (295 aa).

Transmembrane regions (helical) follow at residues 4–24 (IVLF…ILSL) and 34–54 (GLMI…LLMS). His-139 contacts Zn(2+). Residue Glu-140 is part of the active site. His-143 serves as a coordination point for Zn(2+). Helical transmembrane passes span 147-167 (GDMV…IFIS) and 194-214 (IVYM…ASII). Glu-223 is a Zn(2+) binding site.

It belongs to the peptidase M48B family. Requires Zn(2+) as cofactor.

Its subcellular location is the cell inner membrane. The polypeptide is Protease HtpX (Photorhabdus laumondii subsp. laumondii (strain DSM 15139 / CIP 105565 / TT01) (Photorhabdus luminescens subsp. laumondii)).